A 696-amino-acid chain; its full sequence is D-(-)-3-hydroxybutyrate oligomer hydrolase (696 aa).

The signal sequence occupies residues 1–26; sequence MDTHGWGSRILVGAALAALTMLGACN. Residue S309 is the Charge relay system of the active site.

This sequence belongs to the D-(-)-3-hydroxybutyrate oligomer hydrolase family.

Its subcellular location is the secreted. It carries out the reaction (3R)-hydroxybutanoate dimer + H2O = 2 (R)-3-hydroxybutanoate + H(+). Its pathway is lipid metabolism; butanoate metabolism. In terms of biological role, participates in the degradation of poly-3-hydroxybutyrate (PHB). It works downstream of poly(3-hydroxybutyrate) depolymerase, hydrolyzing D(-)-3-hydroxybutyrate oligomers of various length (3HB-oligomers) into 3HB-monomers. The polypeptide is D-(-)-3-hydroxybutyrate oligomer hydrolase (Burkholderia vietnamiensis (strain G4 / LMG 22486) (Burkholderia cepacia (strain R1808))).